Reading from the N-terminus, the 102-residue chain is Large ribosomal subunit protein bL21 (102 aa).

This sequence belongs to the bacterial ribosomal protein bL21 family. As to quaternary structure, part of the 50S ribosomal subunit. Contacts protein L20.

In terms of biological role, this protein binds to 23S rRNA in the presence of protein L20. The protein is Large ribosomal subunit protein bL21 of Cutibacterium acnes (strain DSM 16379 / KPA171202) (Propionibacterium acnes).